A 581-amino-acid chain; its full sequence is Leucine-rich repeat-containing protein 47 (581 aa).

LRR repeat units lie at residues 78-97, 102-123, 132-154, 156-177, 182-204, 205-227, and 228-248; these read QLHSLVLRRNALGPGLSPEL, ALRVLDLSGNALETLPPGEGLG, QLQSLNLSGNRLRELPADLARCA, RLQSLNLTGNRLDAFPPELFRP, LLSELAAADNCLRELSPDIAHLA, SLKTLDLSNNQLTEIPAELADCP, and KLKEINFRGNRLRDKRLEKMV. The segment at 262–301 is disordered; sequence AGGRGGRSKGRQEASEKEDRKKRRERKQHRESGEGEEEVA. Residues 271–280 show a composition bias toward basic and acidic residues; that stretch reads GRQEASEKED. Residues Ser-314, Ser-430, and Ser-519 each carry the phosphoserine modification. Residues 401-436 adopt a coiled-coil conformation; it reads LGRKEAKAKELVRQLQLEAEEQRKQKKRQSVSGLHR.

The chain is Leucine-rich repeat-containing protein 47 (Lrrc47) from Mus musculus (Mouse).